Here is a 796-residue protein sequence, read N- to C-terminus: Protocadherin beta-3 (796 aa).

Positions 1–26 (MEAGGERFLRQRQVLLLFVFLGGSLA) are cleaved as a signal peptide. Topologically, residues 27-690 (GSESRRYSVA…AQADLLTVYL (664 aa)) are extracellular. 5 Cadherin domains span residues 35–133 (VAEE…SPVF), 138–242 (MHLK…APEF), 247–347 (YEVA…PPEL), 352–451 (VNSP…APAF), and 456–561 (YTLF…SPFV). An N-linked (GlcNAc...) asparagine glycan is attached at Asn-169. Residues Asn-418 and Asn-436 are each glycosylated (N-linked (GlcNAc...) asparagine). N-linked (GlcNAc...) asparagine glycosylation is present at Asn-567. The 104-residue stretch at 568 to 671 (GSAPCTELVP…LVDGFSQPYL (104 aa)) folds into the Cadherin 6 domain. A helical transmembrane segment spans residues 691-711 (VVALASVSSLFLFSVLLFVAV). Residues 712–796 (RLCRRSRAAS…PSFRKSFEFS (85 aa)) lie on the Cytoplasmic side of the membrane.

It localises to the cell membrane. In terms of biological role, potential calcium-dependent cell-adhesion protein. May be involved in the establishment and maintenance of specific neuronal connections in the brain. In Pan troglodytes (Chimpanzee), this protein is Protocadherin beta-3 (PCDHB3).